The chain runs to 72 residues: Translation initiation factor IF-1 (72 aa).

The region spanning 1-72 (MSKEELIEFE…TKGRITYRFK (72 aa)) is the S1-like domain.

It belongs to the IF-1 family. Component of the 30S ribosomal translation pre-initiation complex which assembles on the 30S ribosome in the order IF-2 and IF-3, IF-1 and N-formylmethionyl-tRNA(fMet); mRNA recruitment can occur at any time during PIC assembly.

Its subcellular location is the cytoplasm. One of the essential components for the initiation of protein synthesis. Stabilizes the binding of IF-2 and IF-3 on the 30S subunit to which N-formylmethionyl-tRNA(fMet) subsequently binds. Helps modulate mRNA selection, yielding the 30S pre-initiation complex (PIC). Upon addition of the 50S ribosomal subunit IF-1, IF-2 and IF-3 are released leaving the mature 70S translation initiation complex. The chain is Translation initiation factor IF-1 from Hyphomonas neptunium (strain ATCC 15444).